Consider the following 354-residue polypeptide: Protein Wnt-9a (354 aa).

The signal sequence occupies residues 1–15; sequence MALLRALLGLLACTP. 5 disulfides stabilise this stretch: cysteine 85/cysteine 96, cysteine 133/cysteine 141, cysteine 143/cysteine 160, cysteine 207/cysteine 221, and cysteine 209/cysteine 216. Residue asparagine 95 is glycosylated (N-linked (GlcNAc...) asparagine). Serine 213 carries O-palmitoleoyl serine; by PORCN lipidation. The disordered stretch occupies residues 246–271; sequence GSTTNEATGEGDISPPKKSIPGHSDQ. Cystine bridges form between cysteine 288–cysteine 313, cysteine 302–cysteine 308, cysteine 312–cysteine 352, cysteine 328–cysteine 343, cysteine 330–cysteine 340, and cysteine 335–cysteine 336.

This sequence belongs to the Wnt family. Post-translationally, palmitoleoylation is required for efficient binding to frizzled receptors. Depalmitoleoylation leads to Wnt signaling pathway inhibition.

It is found in the secreted. The protein localises to the extracellular space. It localises to the extracellular matrix. In terms of biological role, ligand for members of the frizzled family of seven transmembrane receptors. Functions in the canonical Wnt/beta-catenin signaling pathway. Plays a role in embryonic chondrocyte maturation and in embryonic bone mineralization. This chain is Protein Wnt-9a (WNT9A), found in Gallus gallus (Chicken).